The sequence spans 860 residues: Leucine--tRNA ligase (860 aa).

The 'HIGH' region motif lies at 42–52; sequence PYPSGRLHMGH. The short motif at 619-623 is the 'KMSKS' region element; sequence KMSKS. Lys-622 contributes to the ATP binding site.

This sequence belongs to the class-I aminoacyl-tRNA synthetase family.

It localises to the cytoplasm. It catalyses the reaction tRNA(Leu) + L-leucine + ATP = L-leucyl-tRNA(Leu) + AMP + diphosphate. The protein is Leucine--tRNA ligase of Actinobacillus succinogenes (strain ATCC 55618 / DSM 22257 / CCUG 43843 / 130Z).